A 109-amino-acid chain; its full sequence is V-type proton ATPase 16 kDa proteolipid subunit (109 aa).

Residues valine 1–isoleucine 20 form a helical membrane-spanning segment. Over serine 21–histidine 39 the chain is Lumenal. The chain crosses the membrane as a helical span at residues leucine 40–glycine 61. Residues aspartate 62–lysine 73 lie on the Cytoplasmic side of the membrane. The chain crosses the membrane as a helical span at residues leucine 74–leucine 99. Over serine 100–aspartate 109 the chain is Lumenal.

The protein belongs to the V-ATPase proteolipid subunit family. As to quaternary structure, V-ATPase is a heteromultimeric enzyme composed of a peripheral catalytic V1 complex (main components: subunits A, B, C, D, E, and F) attached to an integral membrane V0 proton pore complex (main component: the proteolipid protein; which is present as a hexamer that forms the proton-conducting pore). High expression in the mesocotyl tip of etiolated seedlings compared to the base.

The protein resides in the vacuole membrane. Proton-conducting pore forming subunit of the membrane integral V0 complex of vacuolar ATPase. V-ATPase is responsible for acidifying a variety of intracellular compartments in eukaryotic cells. The chain is V-type proton ATPase 16 kDa proteolipid subunit from Zea mays (Maize).